We begin with the raw amino-acid sequence, 288 residues long: uncharacterized protein (288 aa).

Disordered stretches follow at residues 31–52 and 179–288; these read KAVD…EAPS and YPSK…VELK. Polar residues predominate over residues 206-217; sequence RPSSPTNFSKLI. Over residues 221-236 the composition is skewed to basic and acidic residues; the sequence is YKDEWLQQQADSDKRA. Low complexity-rich tracts occupy residues 237 to 249 and 267 to 276; these read PQTP…SPSP and AAESSPLSSA.

This is an uncharacterized protein from Bos taurus (Bovine).